The primary structure comprises 60 residues: Large ribosomal subunit protein bL32 (60 aa).

The protein belongs to the bacterial ribosomal protein bL32 family.

This Pediococcus pentosaceus (strain ATCC 25745 / CCUG 21536 / LMG 10740 / 183-1w) protein is Large ribosomal subunit protein bL32.